The primary structure comprises 77 residues: Probable [Fe-S]-dependent transcriptional repressor (77 aa).

Residues cysteine 54, cysteine 59, cysteine 62, and cysteine 68 each coordinate iron-sulfur cluster.

It belongs to the FeoC family.

May function as a transcriptional regulator that controls feoABC expression. This Proteus mirabilis (strain HI4320) protein is Probable [Fe-S]-dependent transcriptional repressor.